The sequence spans 545 residues: Bifunctional purine biosynthesis protein PurH (545 aa).

In terms of domain architecture, MGS-like spans 1–150 (MTNTNRPIRR…KNHATVAIVT (150 aa)).

The protein belongs to the PurH family.

It carries out the reaction (6R)-10-formyltetrahydrofolate + 5-amino-1-(5-phospho-beta-D-ribosyl)imidazole-4-carboxamide = 5-formamido-1-(5-phospho-D-ribosyl)imidazole-4-carboxamide + (6S)-5,6,7,8-tetrahydrofolate. The catalysed reaction is IMP + H2O = 5-formamido-1-(5-phospho-D-ribosyl)imidazole-4-carboxamide. It participates in purine metabolism; IMP biosynthesis via de novo pathway; 5-formamido-1-(5-phospho-D-ribosyl)imidazole-4-carboxamide from 5-amino-1-(5-phospho-D-ribosyl)imidazole-4-carboxamide (10-formyl THF route): step 1/1. Its pathway is purine metabolism; IMP biosynthesis via de novo pathway; IMP from 5-formamido-1-(5-phospho-D-ribosyl)imidazole-4-carboxamide: step 1/1. This is Bifunctional purine biosynthesis protein PurH from Bifidobacterium longum (strain NCC 2705).